Consider the following 1189-residue polypeptide: Phosphinothricin tripeptide synthetase PhsB (1189 aa).

One can recognise a Carrier 1 domain in the interval 5–80 (QTDDVVTGRI…ALAKRIRASR (76 aa)). S40 is subject to O-(pantetheine 4'-phosphoryl)serine. Disordered regions lie at residues 75 to 97 (RIRA…PVDS) and 454 to 476 (TPDR…GGDT). The condensation stretch occupies residues 100 to 541 (TAPLTFQQEP…VALLPLQEPA (442 aa)). Residues 455–472 (PDRDGREPGEGPFAREES) show a composition bias toward basic and acidic residues. The tract at residues 572-969 (AQAHRTPDAV…GREDGQVKLR (398 aa)) is adenylation. A disordered region spans residues 1045–1081 (DRVPLTPSGKTDRKALPDPAAGEQPRSGRGAAPGTPA). Residues 1076 to 1151 (APGTPAEREL…DFALAVVTAQ (76 aa)) form the Carrier 2 domain. S1111 carries the post-translational modification O-(pantetheine 4'-phosphoryl)serine.

Belongs to the NRP synthetase family. Pantetheine 4'-phosphate is required as a cofactor.

The catalysed reaction is holo-[peptidyl-carrier protein] + L-alanine + ATP = L-alanyl-[peptidyl-carrier protein] + AMP + diphosphate. It participates in secondary metabolite biosynthesis; bialaphos biosynthesis. Involved in the biosynthesis of phosphinothricin tripeptide (PTT), also known as bialaphos (BA), a natural-product antibiotic and potent herbicide. Adenylates L-alanine and loads it onto a peptidyl carrier domain via a thioester linkage to the phosphopanthetheine moiety. Shows weaker activity with aminobutyric acid and L-serine. The protein is Phosphinothricin tripeptide synthetase PhsB of Streptomyces viridochromogenes (strain DSM 40736 / JCM 4977 / BCRC 1201 / Tue 494).